A 251-amino-acid chain; its full sequence is MRILIILSIILCSLFARADLEYVDNDIYNYNGGRNENGCLEVYDPYEKFNRKVFAFNSVLDYIILRPLAIGYKNITNDYVKARVNSFVSNVDTPLTAVNYGLQLNYDKTMKSVWRFLINTTLGIGGLFDVAGKVGLPSERQTFGSTLAHYGVAPGPYLVLPIIGSTNARDMTDSVITNYALNPLMYYTHNDFDLGVLAVSKINDRYVVLPFSDYVMKNSTDPYVAIRSALHRAREASVQYPENFKCPKPKN.

An N-terminal signal peptide occupies residues 1–18 (MRILIILSIILCSLFARA).

This sequence belongs to the MlaA family.

This is an uncharacterized protein from Rickettsia felis (strain ATCC VR-1525 / URRWXCal2) (Rickettsia azadi).